The chain runs to 151 residues: Regulatory protein RecX (151 aa).

Belongs to the RecX family.

It is found in the cytoplasm. Functionally, modulates RecA activity. The chain is Regulatory protein RecX from Haemophilus ducreyi (strain 35000HP / ATCC 700724).